The primary structure comprises 661 residues: Kininogen-1 (661 aa).

The N-terminal stretch at 1–20 (MKLITTLLLCSGLLLTLTQG) is a signal peptide. In terms of domain architecture, Cystatin kininogen-type 1 spans 28–131 (CNDEAVFQAV…TQTCKIAPSK (104 aa)). 9 disulfides stabilise this stretch: Cys-28-Cys-631, Cys-83-Cys-94, Cys-107-Cys-125, Cys-141-Cys-144, Cys-205-Cys-217, Cys-228-Cys-247, Cys-263-Cys-266, Cys-327-Cys-339, and Cys-350-Cys-369. A glycan (N-linked (GlcNAc...) asparagine) is linked at Asn-82. Residues 150–253 (TDSPDLEPVL…SQSCTLYSGD (104 aa)) enclose the Cystatin kininogen-type 2 domain. Residues Asn-168 and Asn-204 are each glycosylated (N-linked (GlcNAc...) asparagine). A glycan (N-linked (GlcNAc...) asparagine) is linked at Asn-242. The region spanning 272 to 375 (VDSPELKEVL…TVKCQALDMT (104 aa)) is the Cystatin kininogen-type 3 domain. At Ser-331 the chain carries Phosphoserine. Disordered stretches follow at residues 405–471 (YIAR…LGHG), 485–583 (DGDD…FQDS), and 626–661 (ATSP…DALS). 2 stretches are compositionally biased toward basic residues: residues 434-471 (KANK…LGHG) and 492-526 (TVGH…HGKH). A compositionally biased stretch (low complexity) spans 541-555 (TESLASSSEYSTTST). The segment covering 650–661 (EFSDFDLLDALS) has biased composition (acidic residues).

As to quaternary structure, isoform LMW interacts with CRISP3. Post-translationally, bradykinin is released from kininogen by plasma kallikrein. In terms of processing, phosphorylated by FAM20C in the extracellular medium. Bradykinin is inactivated by ACE, which removes the dipeptide Arg-Phe from its C-terminus. Plasma.

The protein localises to the secreted. Its subcellular location is the extracellular space. Its function is as follows. Kininogens are inhibitors of thiol proteases. HMW-kininogen plays an important role in blood coagulation by helping to position optimally prekallikrein and factor XI next to factor XII; HMW-kininogen inhibits the thrombin- and plasmin-induced aggregation of thrombocytes. LMW-kininogen inhibits the aggregation of thrombocytes. LMW-kininogen is in contrast to HMW-kininogen not involved in blood clotting. Functionally, the active peptide bradykinin is a potent vasodilatator that is released from HMW-kininogen shows a variety of physiological effects: (A) influence in smooth muscle contraction, (B) induction of hypotension, (C) natriuresis and diuresis, (D) decrease in blood glucose level, (E) it is a mediator of inflammation and causes (E1) increase in vascular permeability, (E2) stimulation of nociceptors (4E3) release of other mediators of inflammation (e.g. prostaglandins), (F) it has a cardioprotective effect (directly via bradykinin action, indirectly via endothelium-derived relaxing factor action). This is Kininogen-1 (Kng1) from Mus musculus (Mouse).